We begin with the raw amino-acid sequence, 375 residues long: Succinyl-diaminopimelate desuccinylase (375 aa).

His66 lines the Zn(2+) pocket. The active site involves Asp68. Asp99 contacts Zn(2+). The active-site Proton acceptor is Glu133. Zn(2+)-binding residues include Glu134, Glu162, and His348.

This sequence belongs to the peptidase M20A family. DapE subfamily. Homodimer. It depends on Zn(2+) as a cofactor. The cofactor is Co(2+).

It catalyses the reaction N-succinyl-(2S,6S)-2,6-diaminopimelate + H2O = (2S,6S)-2,6-diaminopimelate + succinate. The protein operates within amino-acid biosynthesis; L-lysine biosynthesis via DAP pathway; LL-2,6-diaminopimelate from (S)-tetrahydrodipicolinate (succinylase route): step 3/3. Its function is as follows. Catalyzes the hydrolysis of N-succinyl-L,L-diaminopimelic acid (SDAP), forming succinate and LL-2,6-diaminopimelate (DAP), an intermediate involved in the bacterial biosynthesis of lysine and meso-diaminopimelic acid, an essential component of bacterial cell walls. The chain is Succinyl-diaminopimelate desuccinylase from Pectobacterium atrosepticum (strain SCRI 1043 / ATCC BAA-672) (Erwinia carotovora subsp. atroseptica).